Consider the following 574-residue polypeptide: Alpha-farnesene synthase (574 aa).

Mn(2+) is bound by residues aspartate 326, aspartate 330, and glutamate 478. Positions 326 to 330 (DDIYD) match the DDXXD motif motif.

Belongs to the terpene synthase family. Tpsd subfamily. Mn(2+) serves as cofactor.

The protein localises to the cytoplasm. The catalysed reaction is (2E,6E)-farnesyl diphosphate = (3E,6E)-alpha-farnesene + diphosphate. Its pathway is terpene metabolism; oleoresin biosynthesis. Involved in sesquiterpene (C15) biosynthesis. The major product is alpha-farnesene. In Pinus taeda (Loblolly pine), this protein is Alpha-farnesene synthase (PT5).